A 148-amino-acid chain; its full sequence is Lysozyme C (148 aa).

A signal peptide spans 1-18; that stretch reads MRALIILGLVLLSVTVQG. In terms of domain architecture, C-type lysozyme spans 19–148; sequence KIFERCELAR…VSQYVKGCGV (130 aa). 4 cysteine pairs are disulfide-bonded: cysteine 24–cysteine 146, cysteine 48–cysteine 134, cysteine 83–cysteine 99, and cysteine 95–cysteine 113. Catalysis depends on residues glutamate 53 and aspartate 71.

The protein belongs to the glycosyl hydrolase 22 family. As to quaternary structure, monomer.

It is found in the secreted. The catalysed reaction is Hydrolysis of (1-&gt;4)-beta-linkages between N-acetylmuramic acid and N-acetyl-D-glucosamine residues in a peptidoglycan and between N-acetyl-D-glucosamine residues in chitodextrins.. Its function is as follows. Lysozymes have primarily a bacteriolytic function; those in tissues and body fluids are associated with the monocyte-macrophage system and enhance the activity of immunoagents. Also plays a role in digestion in this species. The sequence is that of Lysozyme C (LYZ) from Trachypithecus francoisi (Francois' leaf monkey).